The primary structure comprises 209 residues: Uracil phosphoribosyltransferase (209 aa).

Residues arginine 79, arginine 104, and 131 to 139 (DPMLATGNS) contribute to the 5-phospho-alpha-D-ribose 1-diphosphate site. Uracil-binding positions include isoleucine 194 and 199–201 (GDA). Aspartate 200 contributes to the 5-phospho-alpha-D-ribose 1-diphosphate binding site.

It belongs to the UPRTase family. It depends on Mg(2+) as a cofactor.

It carries out the reaction UMP + diphosphate = 5-phospho-alpha-D-ribose 1-diphosphate + uracil. It participates in pyrimidine metabolism; UMP biosynthesis via salvage pathway; UMP from uracil: step 1/1. With respect to regulation, allosterically activated by GTP. Its function is as follows. Catalyzes the conversion of uracil and 5-phospho-alpha-D-ribose 1-diphosphate (PRPP) to UMP and diphosphate. In Rhizobium meliloti (strain 1021) (Ensifer meliloti), this protein is Uracil phosphoribosyltransferase.